The primary structure comprises 545 residues: CTP synthase (545 aa).

The tract at residues 1-266 is amidoligase domain; that stretch reads MTTRYIFVTG…DELVTKRFGI (266 aa). S14 serves as a coordination point for CTP. S14 lines the UTP pocket. Residues 15–20 and D72 each bind ATP; that span reads SLGKGI. Mg(2+)-binding residues include D72 and E140. CTP contacts are provided by residues 147-149, 187-192, and K223; these read DIE and KTKPTQ. Residues 187-192 and K223 contribute to the UTP site; that span reads KTKPTQ. Residue 239–241 participates in ATP binding; that stretch reads KDV. In terms of domain architecture, Glutamine amidotransferase type-1 spans 291–542; that stretch reads TIGMVGKYIE…VAAAAAHQKR (252 aa). G352 serves as a coordination point for L-glutamine. The active-site Nucleophile; for glutamine hydrolysis is the C379. Residues 380–383, E403, and R470 contribute to the L-glutamine site; that span reads LGMQ. Catalysis depends on residues H515 and E517.

This sequence belongs to the CTP synthase family. In terms of assembly, homotetramer.

It carries out the reaction UTP + L-glutamine + ATP + H2O = CTP + L-glutamate + ADP + phosphate + 2 H(+). The enzyme catalyses L-glutamine + H2O = L-glutamate + NH4(+). It catalyses the reaction UTP + NH4(+) + ATP = CTP + ADP + phosphate + 2 H(+). It functions in the pathway pyrimidine metabolism; CTP biosynthesis via de novo pathway; CTP from UDP: step 2/2. Allosterically activated by GTP, when glutamine is the substrate; GTP has no effect on the reaction when ammonia is the substrate. The allosteric effector GTP functions by stabilizing the protein conformation that binds the tetrahedral intermediate(s) formed during glutamine hydrolysis. Inhibited by the product CTP, via allosteric rather than competitive inhibition. In terms of biological role, catalyzes the ATP-dependent amination of UTP to CTP with either L-glutamine or ammonia as the source of nitrogen. Regulates intracellular CTP levels through interactions with the four ribonucleotide triphosphates. This chain is CTP synthase, found in Shewanella woodyi (strain ATCC 51908 / MS32).